Reading from the N-terminus, the 226-residue chain is 7-cyano-7-deazaguanine synthase (226 aa).

Position 9 to 19 (9 to 19) interacts with ATP; the sequence is LSGGLDSTVAT. Zn(2+) contacts are provided by Cys192, Cys200, Cys203, and Cys206.

Belongs to the QueC family. The cofactor is Zn(2+).

The catalysed reaction is 7-carboxy-7-deazaguanine + NH4(+) + ATP = 7-cyano-7-deazaguanine + ADP + phosphate + H2O + H(+). It participates in purine metabolism; 7-cyano-7-deazaguanine biosynthesis. Catalyzes the ATP-dependent conversion of 7-carboxy-7-deazaguanine (CDG) to 7-cyano-7-deazaguanine (preQ(0)). The chain is 7-cyano-7-deazaguanine synthase from Methanosphaera stadtmanae (strain ATCC 43021 / DSM 3091 / JCM 11832 / MCB-3).